The sequence spans 635 residues: Threonine--tRNA ligase (635 aa).

In terms of domain architecture, TGS spans 1 to 61; the sequence is MIKITLKDGK…HKDSSLEILT (61 aa). A catalytic region spans residues 242–532; that stretch reads DHRKLGKELD…LIEQYAGAFP (291 aa). Cysteine 333, histidine 384, and histidine 509 together coordinate Zn(2+).

The protein belongs to the class-II aminoacyl-tRNA synthetase family. Homodimer. The cofactor is Zn(2+).

The protein localises to the cytoplasm. It carries out the reaction tRNA(Thr) + L-threonine + ATP = L-threonyl-tRNA(Thr) + AMP + diphosphate + H(+). Functionally, catalyzes the attachment of threonine to tRNA(Thr) in a two-step reaction: L-threonine is first activated by ATP to form Thr-AMP and then transferred to the acceptor end of tRNA(Thr). Also edits incorrectly charged L-seryl-tRNA(Thr). This Clostridium botulinum (strain Loch Maree / Type A3) protein is Threonine--tRNA ligase.